Consider the following 119-residue polypeptide: Fluoride-specific ion channel FluC (119 aa).

4 helical membrane passes run 5–25 (IIPL…LNLA), 30–50 (IPPA…IGIF), 59–79 (WKLL…GFSL), and 97–117 (IFLH…IGAA). The Na(+) site is built by G69 and T72.

The protein belongs to the fluoride channel Fluc/FEX (TC 1.A.43) family.

Its subcellular location is the cell inner membrane. It catalyses the reaction fluoride(in) = fluoride(out). With respect to regulation, na(+) is not transported, but it plays an essential structural role and its presence is essential for fluoride channel function. Functionally, fluoride-specific ion channel. Important for reducing fluoride concentration in the cell, thus reducing its toxicity. This chain is Fluoride-specific ion channel FluC, found in Neisseria meningitidis serogroup B (strain ATCC BAA-335 / MC58).